A 129-amino-acid polypeptide reads, in one-letter code: Profilin-4 (129 aa).

Belongs to the profilin family. Expressed in testis, in seminiferous tubules (at protein level). Expressed in spermatocytes and spermatids, but not in spermatogonium.

Its subcellular location is the cytoplasm. Functionally, involved in male fertility. Required for manchette development and acrosome biogenesis during spermiogenesis. Binds in vitro to phospholipids, including phosphatidylinositol 3-phosphate (PtdIns(3)P), phosphatidylinositol 4,5-bisphosphate (PtdIns(4,5)P2), phosphatidylinositol 4-phosphate (PtdIns(4)P) and phosphatidic acid (PA). Contrary to other profilin family members, does not bind to actin in vitro. The polypeptide is Profilin-4 (Pfn4) (Rattus norvegicus (Rat)).